The chain runs to 548 residues: ATP synthase subunit alpha (548 aa).

172–179 (GDRKTGKT) is a binding site for ATP.

This sequence belongs to the ATPase alpha/beta chains family. In terms of assembly, F-type ATPases have 2 components, CF(1) - the catalytic core - and CF(0) - the membrane proton channel. CF(1) has five subunits: alpha(3), beta(3), gamma(1), delta(1), epsilon(1). CF(0) has three main subunits: a(1), b(2) and c(9-12). The alpha and beta chains form an alternating ring which encloses part of the gamma chain. CF(1) is attached to CF(0) by a central stalk formed by the gamma and epsilon chains, while a peripheral stalk is formed by the delta and b chains.

The protein localises to the cell membrane. The enzyme catalyses ATP + H2O + 4 H(+)(in) = ADP + phosphate + 5 H(+)(out). In terms of biological role, produces ATP from ADP in the presence of a proton gradient across the membrane. The alpha chain is a regulatory subunit. The chain is ATP synthase subunit alpha from Mycolicibacterium smegmatis (strain ATCC 700084 / mc(2)155) (Mycobacterium smegmatis).